A 163-amino-acid chain; its full sequence is SsrA-binding protein (163 aa).

Belongs to the SmpB family.

Its subcellular location is the cytoplasm. Functionally, required for rescue of stalled ribosomes mediated by trans-translation. Binds to transfer-messenger RNA (tmRNA), required for stable association of tmRNA with ribosomes. tmRNA and SmpB together mimic tRNA shape, replacing the anticodon stem-loop with SmpB. tmRNA is encoded by the ssrA gene; the 2 termini fold to resemble tRNA(Ala) and it encodes a 'tag peptide', a short internal open reading frame. During trans-translation Ala-aminoacylated tmRNA acts like a tRNA, entering the A-site of stalled ribosomes, displacing the stalled mRNA. The ribosome then switches to translate the ORF on the tmRNA; the nascent peptide is terminated with the 'tag peptide' encoded by the tmRNA and targeted for degradation. The ribosome is freed to recommence translation, which seems to be the essential function of trans-translation. The chain is SsrA-binding protein from Shewanella baltica (strain OS223).